A 447-amino-acid chain; its full sequence is Argininosuccinate synthase (447 aa).

Residues 17 to 25 and A43 each bind ATP; that span reads AFSGGLDTS. Y99 is an L-citrulline binding site. G129 and T131 together coordinate ATP. Residues T131, N135, and D136 each coordinate L-aspartate. N135 is a binding site for L-citrulline. An ATP-binding site is contributed by D136. Residues R139 and S192 each contribute to the L-citrulline site. An ATP-binding site is contributed by D194. 3 residues coordinate L-citrulline: T201, E203, and E280.

This sequence belongs to the argininosuccinate synthase family. Type 2 subfamily. As to quaternary structure, homotetramer.

It localises to the cytoplasm. It carries out the reaction L-citrulline + L-aspartate + ATP = 2-(N(omega)-L-arginino)succinate + AMP + diphosphate + H(+). The protein operates within amino-acid biosynthesis; L-arginine biosynthesis; L-arginine from L-ornithine and carbamoyl phosphate: step 2/3. This is Argininosuccinate synthase from Shigella dysenteriae serotype 1 (strain Sd197).